The sequence spans 66 residues: DNA gyrase inhibitor YacG (66 aa).

4 residues coordinate Zn(2+): Cys-9, Cys-12, Cys-28, and Cys-32.

This sequence belongs to the DNA gyrase inhibitor YacG family. Interacts with GyrB. It depends on Zn(2+) as a cofactor.

Its function is as follows. Inhibits all the catalytic activities of DNA gyrase by preventing its interaction with DNA. Acts by binding directly to the C-terminal domain of GyrB, which probably disrupts DNA binding by the gyrase. The protein is DNA gyrase inhibitor YacG of Pseudomonas fluorescens (strain SBW25).